Consider the following 626-residue polypeptide: Forkhead box protein O1 (626 aa).

A compositionally biased stretch (pro residues) spans 1 to 11 (MAEAPLPPPPG). Disordered stretches follow at residues 1-57 (MAEA…PAAG), 90-142 (DIRQ…SRRN), 218-319 (SSWW…MPEQ), and 484-519 (PTYG…MTHN). Low complexity-rich tracts occupy residues 37–48 (NPSSSANSSPAP) and 101–133 (QHPQ…AQQP). Residues 144–238 (WGNLSYADLI…KNGKSPRRRA (95 aa)) constitute a DNA-binding region (fork-head). The span at 248–259 (AKSRGRAAKKKA) shows a compositional bias: basic residues. The segment covering 262–277 (QSSQDGSSDSPGSQFS) has biased composition (low complexity). Composition is skewed to polar residues over residues 298–310 (RPRT…TISG) and 484–494 (PTYGSQPTHNK).

Post-translationally, phosphorylated by AKT1; insulin-induced. IGF1 rapidly induces phosphorylation of Thr-28, Ser-240 and Ser-303. Phosphorylation of Ser-240 decreases DNA-binding activity and promotes the phosphorylation of Thr-28, and Ser-303, which leads to nuclear exclusion and loss of function. Phosphorylation of Ser-313 is independent of IGF1 and leads to reduced function.

The protein localises to the cytoplasm. It is found in the nucleus. In terms of biological role, transcription factor that regulates metabolic homeostasis in response to oxidative stress. Binds to the consensus sequence 5'-TT[G/A]TTTTG-3' and the related Daf-16 family binding element (DBE) with consensus sequence 5'-TT[G/A]TTTAC-3'. Main regulator of redox balance and osteoblast numbers and controls bone mass. Orchestrates the endocrine function of the skeleton in regulating glucose metabolism. Also acts as a key regulator of chondrogenic commitment of skeletal progenitor cells in response to lipid availability: when lipids levels are low, translocates to the nucleus and promotes expression of sox9, which induces chondrogenic commitment and suppresses fatty acid oxidation. Acts synergistically with atf4 to suppress osteocalcin/bglap activity, increasing glucose levels and triggering glucose intolerance and insulin insensitivity. Also suppresses the transcriptional activity of runx2, an upstream activator of osteocalcin/bglap. May act as a positive regulator of apoptosis in cardiac smooth muscle cells as a result of its transcriptional activation of pro-apoptotic genes. This Xenopus tropicalis (Western clawed frog) protein is Forkhead box protein O1.